Consider the following 310-residue polypeptide: Oxygen-dependent coproporphyrinogen-III oxidase (310 aa).

Ser92 is a substrate binding site. A divalent metal cation contacts are provided by His96 and His106. The Proton donor role is filled by His106. Residue 108-110 participates in substrate binding; that stretch reads NVR. Positions 145 and 175 each coordinate a divalent metal cation. The tract at residues 240–275 is important for dimerization; the sequence is YVEFNLIWDRGTLFGLQSGGRTESILMSMPPLARWE. Substrate is bound at residue 258–260; sequence GGR.

The protein belongs to the aerobic coproporphyrinogen-III oxidase family. Homodimer. A divalent metal cation serves as cofactor.

The protein resides in the cytoplasm. The enzyme catalyses coproporphyrinogen III + O2 + 2 H(+) = protoporphyrinogen IX + 2 CO2 + 2 H2O. Its pathway is porphyrin-containing compound metabolism; protoporphyrin-IX biosynthesis; protoporphyrinogen-IX from coproporphyrinogen-III (O2 route): step 1/1. Its function is as follows. Involved in the heme biosynthesis. Catalyzes the aerobic oxidative decarboxylation of propionate groups of rings A and B of coproporphyrinogen-III to yield the vinyl groups in protoporphyrinogen-IX. The protein is Oxygen-dependent coproporphyrinogen-III oxidase of Pectobacterium carotovorum subsp. carotovorum (strain PC1).